The sequence spans 520 residues: Peptide chain release factor 3 (520 aa).

The tr-type G domain maps to 8–277 (ESRKTFAIIS…HAPMPNARQT (270 aa)). GTP is bound by residues 17-24 (SHPDAGKT), 85-89 (DTPGH), and 139-142 (NKLD).

It belongs to the TRAFAC class translation factor GTPase superfamily. Classic translation factor GTPase family. PrfC subfamily.

The protein resides in the cytoplasm. Its function is as follows. Increases the formation of ribosomal termination complexes and stimulates activities of RF-1 and RF-2. It binds guanine nucleotides and has strong preference for UGA stop codons. It may interact directly with the ribosome. The stimulation of RF-1 and RF-2 is significantly reduced by GTP and GDP, but not by GMP. In Staphylococcus haemolyticus (strain JCSC1435), this protein is Peptide chain release factor 3.